A 298-amino-acid chain; its full sequence is Inosose dehydratase (298 aa).

This sequence belongs to the IolE/MocC family. Glutathione serves as cofactor. Requires Co(2+) as cofactor. It depends on Mn(2+) as a cofactor.

The enzyme catalyses scyllo-inosose = 3D-3,5/4-trihydroxycyclohexane-1,2-dione + H2O. Its pathway is polyol metabolism; myo-inositol degradation into acetyl-CoA; acetyl-CoA from myo-inositol: step 2/7. Functionally, catalyzes the dehydration of inosose (2-keto-myo-inositol, 2KMI or 2,4,6/3,5-pentahydroxycyclohexanone) to 3D-(3,5/4)-trihydroxycyclohexane-1,2-dione (D-2,3-diketo-4-deoxy-epi-inositol). The chain is Inosose dehydratase from Geobacillus thermodenitrificans (strain NG80-2).